The sequence spans 1166 residues: UDP-N-acetylglucosamine transferase subunit ALG13 (1166 aa).

A glycosyltransferase activity region spans residues 1–125; the sequence is MKRAFVTVGT…LHKEGHLFYC (125 aa). Residues 126–394 form a deubiquitinase activity region; the sequence is TCRVLSCPAP…GSRRNKHHAL (269 aa). The OTU domain occupies 225–346; that stretch reads LFRKVVAKDA…NGHYDSVYSK (122 aa). The For deubiquitinase activity role is filled by Asp-233. Cys-236 (nucleophile; for deubiquitinase activity) is an active-site residue. The active-site For deubiquitinase activity is His-339. The tract at residues 393–438 is disordered; the sequence is ALTASVEGSSDQKSSTEDRTEEAAACSSAASTPEGNKQGTERQKVP. One can recognise a Tudor domain in the interval 486 to 546; that stretch reads YYFLGDKCQV…RPVNQVALLP (61 aa). Composition is skewed to pro residues over residues 921–930, 941–957, and 1004–1034; these read PPPLPPPPPA, PLPP…PPYS, and QPQP…PPPQ. Disordered regions lie at residues 921-966 and 998-1056; these read PPPL…SDLP and QQQL…EQPL.

Belongs to the glycosyltransferase 28 family. As to quaternary structure, forms with ALG14 the active heterodimeric UDP-N-acetylglucosamine transferase complex. In terms of assembly, not able to interact with ALG14 to form an active UDP-N-acetylglucosamine transferase complex.

Its subcellular location is the endoplasmic reticulum membrane. The enzyme catalyses an N-acetyl-alpha-D-glucosaminyl-diphospho-di-trans,poly-cis-dolichol + UDP-N-acetyl-alpha-D-glucosamine = an N,N'-diacetylchitobiosyl-diphospho-di-trans,poly-cis-dolichol + UDP + H(+). It functions in the pathway protein modification; protein glycosylation. Catalytic subunit of the UDP-N-acetylglucosamine transferase complex that operates in the biosynthetic pathway of dolichol-linked oligosaccharides, the glycan precursors employed in protein asparagine (N)-glycosylation. The assembly of dolichol-linked oligosaccharides begins on the cytosolic side of the endoplasmic reticulum membrane and finishes in its lumen. The sequential addition of sugars to dolichol pyrophosphate produces dolichol-linked oligosaccharides containing fourteen sugars, including two GlcNAcs, nine mannoses and three glucoses. Once assembled, the oligosaccharide is transferred from the lipid to nascent proteins by oligosaccharyltransferases. On the cytoplasmic face of the endoplasmic reticulum, the dimeric ALG13/ALG14 complex catalyzes the second step of dolichol pyrophosphate biosynthesis, transferring a beta1,4-linked N-acetylglucosamine (GlcNAc) from UDP-GlcNAc to GlcNAc-pyrophosphatedolichol (Gn-PDol) to produce N,N'-diacetylchitobiosyl diphosphodolichol. N,N'-diacetylchitobiosyl diphosphodolichol is a substrate for ALG1, the following enzyme in the biosynthetic pathway. Functionally, no glycosyltransferase or deubiquitinase activity is detected for this potential multifunctional enzyme. In Mus musculus (Mouse), this protein is UDP-N-acetylglucosamine transferase subunit ALG13.